We begin with the raw amino-acid sequence, 234 residues long: Uridylate kinase (234 aa).

ATP is bound by residues 8 to 11 (KLSG), Gly-51, and Arg-55. UMP is bound by residues Asp-68 and 129 to 136 (TSNPFFTT). ATP is bound by residues Thr-156, Tyr-162, and Asp-165.

Belongs to the UMP kinase family. Homohexamer.

It localises to the cytoplasm. It carries out the reaction UMP + ATP = UDP + ADP. It participates in pyrimidine metabolism; CTP biosynthesis via de novo pathway; UDP from UMP (UMPK route): step 1/1. With respect to regulation, inhibited by UTP. Functionally, catalyzes the reversible phosphorylation of UMP to UDP. The protein is Uridylate kinase of Fervidobacterium nodosum (strain ATCC 35602 / DSM 5306 / Rt17-B1).